The following is a 379-amino-acid chain: Chaperone protein DnaJ (379 aa).

One can recognise a J domain in the interval 5-69; it reads EYYERLGVDK…QKRAAYDQYG (65 aa). The segment at 141-223 adopts a CR-type zinc-finger fold; the sequence is GVEKQVKYNR…CHGSGHEKVA (83 aa). Zn(2+) is bound by residues Cys154, Cys157, Cys171, Cys174, Cys197, Cys200, Cys211, and Cys214. CXXCXGXG motif repeat units lie at residues 154-161, 171-178, 197-204, and 211-218; these read CHTCDGSG, CHKCGGRG, CDVCHGTG, and CTTCHGSG.

This sequence belongs to the DnaJ family. Homodimer. It depends on Zn(2+) as a cofactor.

The protein localises to the cytoplasm. Its function is as follows. Participates actively in the response to hyperosmotic and heat shock by preventing the aggregation of stress-denatured proteins and by disaggregating proteins, also in an autonomous, DnaK-independent fashion. Unfolded proteins bind initially to DnaJ; upon interaction with the DnaJ-bound protein, DnaK hydrolyzes its bound ATP, resulting in the formation of a stable complex. GrpE releases ADP from DnaK; ATP binding to DnaK triggers the release of the substrate protein, thus completing the reaction cycle. Several rounds of ATP-dependent interactions between DnaJ, DnaK and GrpE are required for fully efficient folding. Also involved, together with DnaK and GrpE, in the DNA replication of plasmids through activation of initiation proteins. In Lactococcus lactis subsp. cremoris (strain SK11), this protein is Chaperone protein DnaJ.